The primary structure comprises 304 residues: Homoserine O-acetyltransferase (304 aa).

The active-site Acyl-thioester intermediate is Cys142. Substrate contacts are provided by Lys163 and Ser191. The active-site Proton acceptor is His234. Glu236 is an active-site residue. Residue Arg248 participates in substrate binding.

The protein belongs to the MetA family.

It is found in the cytoplasm. The catalysed reaction is L-homoserine + acetyl-CoA = O-acetyl-L-homoserine + CoA. Its pathway is amino-acid biosynthesis; L-methionine biosynthesis via de novo pathway; O-acetyl-L-homoserine from L-homoserine: step 1/1. In terms of biological role, transfers an acetyl group from acetyl-CoA to L-homoserine, forming acetyl-L-homoserine. The sequence is that of Homoserine O-acetyltransferase from Thermotoga petrophila (strain ATCC BAA-488 / DSM 13995 / JCM 10881 / RKU-1).